A 256-amino-acid chain; its full sequence is Ribonuclease HII (256 aa).

An RNase H type-2 domain is found at 72–256 (QYVAGIDEVG…TFRPVPDYVN (185 aa)). A divalent metal cation contacts are provided by Asp78, Glu79, and Asp170.

It belongs to the RNase HII family. Mn(2+) serves as cofactor. Requires Mg(2+) as cofactor.

Its subcellular location is the cytoplasm. The enzyme catalyses Endonucleolytic cleavage to 5'-phosphomonoester.. Functionally, endonuclease that specifically degrades the RNA of RNA-DNA hybrids. The polypeptide is Ribonuclease HII (Limosilactobacillus fermentum (strain NBRC 3956 / LMG 18251) (Lactobacillus fermentum)).